We begin with the raw amino-acid sequence, 325 residues long: Elongation factor P--(R)-beta-lysine ligase (325 aa).

76–78 contributes to the substrate binding site; it reads SPE. ATP contacts are provided by residues 100–102 and Asn-109; that span reads RNE. Residue Tyr-118 coordinates substrate. Position 244-245 (244-245) interacts with ATP; sequence EL. Substrate is bound at residue Glu-251. Gly-300 is an ATP binding site.

It belongs to the class-II aminoacyl-tRNA synthetase family. EpmA subfamily. Homodimer.

It carries out the reaction D-beta-lysine + L-lysyl-[protein] + ATP = N(6)-((3R)-3,6-diaminohexanoyl)-L-lysyl-[protein] + AMP + diphosphate + H(+). Its function is as follows. With EpmB is involved in the beta-lysylation step of the post-translational modification of translation elongation factor P (EF-P). Catalyzes the ATP-dependent activation of (R)-beta-lysine produced by EpmB, forming a lysyl-adenylate, from which the beta-lysyl moiety is then transferred to the epsilon-amino group of a conserved specific lysine residue in EF-P. The protein is Elongation factor P--(R)-beta-lysine ligase of Citrobacter koseri (strain ATCC BAA-895 / CDC 4225-83 / SGSC4696).